Consider the following 918-residue polypeptide: DNA repair and recombination protein RAD54B (918 aa).

The segment covering 1–11 (MRRSAAPSQVL) has biased composition (polar residues). The segment at 1–29 (MRRSAAPSQVLGNVAKKPRFIPPGKSNAL) is disordered. A Helicase ATP-binding domain is found at 320–487 (GMRVSGRFGA…YALIEFVNPG (168 aa)). ATP is bound at residue 333-340 (DEMGLGKT). Residues 438-441 (DEGH) carry the DEGH box motif. The region spanning 653-817 (VLVKLLAAIR…HIHFSVEELR (165 aa)) is the Helicase C-terminal domain. The disordered stretch occupies residues 842–873 (KDHQNPSSKKPSVSRCCQLRQDQGKHNSKKPL).

The protein belongs to the SNF2/RAD54 helicase family.

It localises to the nucleus. Its function is as follows. Involved in DNA repair and mitotic recombination. The sequence is that of DNA repair and recombination protein RAD54B (RAD54B) from Gallus gallus (Chicken).